Consider the following 341-residue polypeptide: tRNA-specific 2-thiouridylase MnmA (341 aa).

ATP is bound by residues 8–15 (GMSGGVDS) and M34. The active-site Nucleophile is the C94. C94 and C188 are disulfide-bonded. Residue G118 coordinates ATP. The segment at 136–138 (KDQ) is interaction with tRNA. C188 serves as the catalytic Cysteine persulfide intermediate. The interaction with tRNA stretch occupies residues 290–291 (RY).

The protein belongs to the MnmA/TRMU family.

Its subcellular location is the cytoplasm. The catalysed reaction is S-sulfanyl-L-cysteinyl-[protein] + uridine(34) in tRNA + AH2 + ATP = 2-thiouridine(34) in tRNA + L-cysteinyl-[protein] + A + AMP + diphosphate + H(+). Functionally, catalyzes the 2-thiolation of uridine at the wobble position (U34) of tRNA, leading to the formation of s(2)U34. The sequence is that of tRNA-specific 2-thiouridylase MnmA from Sulfurimonas denitrificans (strain ATCC 33889 / DSM 1251) (Thiomicrospira denitrificans (strain ATCC 33889 / DSM 1251)).